An 82-amino-acid chain; its full sequence is Putative membrane protein insertion efficiency factor (82 aa).

This sequence belongs to the UPF0161 family.

The protein localises to the cell inner membrane. In terms of biological role, could be involved in insertion of integral membrane proteins into the membrane. In Rickettsia massiliae (strain Mtu5), this protein is Putative membrane protein insertion efficiency factor.